Consider the following 347-residue polypeptide: Probable 3-hydroxyisobutyrate dehydrogenase, mitochondrial (347 aa).

The transit peptide at 1 to 34 directs the protein to the mitochondrion; that stretch reads MAIRRAQTLLCLSKFKTNFVSGSLHRFSSSSQNS. Residues 38–67, 101–102, and T134 each bind NAD(+); these read QNVG…TVHD and LP. K219 is an active-site residue. K294 contacts NAD(+).

This sequence belongs to the HIBADH-related family. 3-hydroxyisobutyrate dehydrogenase subfamily.

Its subcellular location is the mitochondrion. It carries out the reaction 3-hydroxy-2-methylpropanoate + NAD(+) = 2-methyl-3-oxopropanoate + NADH + H(+). It participates in amino-acid degradation; L-valine degradation. The polypeptide is Probable 3-hydroxyisobutyrate dehydrogenase, mitochondrial (Arabidopsis thaliana (Mouse-ear cress)).